The following is a 100-amino-acid chain: Large ribosomal subunit protein uL23 (100 aa).

Belongs to the universal ribosomal protein uL23 family. As to quaternary structure, part of the 50S ribosomal subunit. Contacts protein L29, and trigger factor when it is bound to the ribosome.

Functionally, one of the early assembly proteins it binds 23S rRNA. One of the proteins that surrounds the polypeptide exit tunnel on the outside of the ribosome. Forms the main docking site for trigger factor binding to the ribosome. The sequence is that of Large ribosomal subunit protein uL23 from Shewanella amazonensis (strain ATCC BAA-1098 / SB2B).